The primary structure comprises 261 residues: Guanine nucleotide exchange factor BopE (261 aa).

The protein belongs to the GEF (guanine exchange factor) SopE family. As to quaternary structure, monomer. Interacts with human CDC42.

Its subcellular location is the secreted. Its function is as follows. Activator for both CDC42 and RAC1 by directly interacting with these Rho GTPases and acting as a guanine nucleotide exchange factor (GEF). This activation results in actin cytoskeleton rearrangements and stimulates membrane ruffling, thus promoting bacterial entry into non-phagocytic cells. This chain is Guanine nucleotide exchange factor BopE (bopE), found in Burkholderia mallei (strain NCTC 10247).